The following is a 240-amino-acid chain: Protein RoBo-1 (240 aa).

Residues 1-26 (MSWFLVLKCLLTVCIISHLSVSSTES) form the signal peptide. Asn42 carries N-linked (GlcNAc...) asparagine glycosylation. Disulfide bonds link Cys47–Cys76, Cys81–Cys102, Cys103–Cys108, Cys127–Cys151, and Cys144–Cys171. An N-linked (GlcNAc...) asparagine glycan is attached at Asn153.

It belongs to the CNF-like-inhibitor family. Post-translationally, N-glycosylated. In terms of tissue distribution, expressed abundantly in bone, including the lengthening growth plate where cartilage is remodeled into bone.

It is found in the secreted. In terms of biological role, may play a novel role in the growth or remodeling of bone. This is Protein RoBo-1 from Rattus norvegicus (Rat).